The sequence spans 162 residues: Inner membrane protein YbjO (162 aa).

Topologically, residues 1–23 (MEDETLGFFKKTSSSHARLNVPA) are periplasmic. The helical transmembrane segment at 24–44 (LVQVAALAIIMIRGLDVLMIF) threads the bilayer. The Cytoplasmic portion of the chain corresponds to 45 to 66 (NTLGVRGIGEFIHRSVQTWSLT). Residues 67–87 (LVFLSSLVLVFIEIWCAFSLV) form a helical membrane-spanning segment. The Periplasmic segment spans residues 88–94 (KGRRWAR). A helical membrane pass occupies residues 95 to 115 (WLYLLTQITAASYLWAASLGY). At 116-162 (GYPELFSIPGESKREIFHSLMLQKLPDMLILMLLFVPSTSRRFFQLQ) the chain is on the cytoplasmic side.

The protein resides in the cell inner membrane. The protein is Inner membrane protein YbjO (ybjO) of Escherichia coli O157:H7.